We begin with the raw amino-acid sequence, 438 residues long: Battenin (438 aa).

The segment at 1 to 29 (MGGCAGSRRRLLDSEEEETAPEPRPPRSY) is disordered. At 1–37 (MGGCAGSRRRLLDSEEEETAPEPRPPRSYHKGALWKN) the chain is on the cytoplasmic side. The residue at position 14 (Ser14) is a Phosphoserine. The chain crosses the membrane as a helical span at residues 38-58 (VMGFWLLGLCNNFSYVVMLSA). At 59–127 (AHDILSHQRA…GLHLLPYSPR (69 aa)) the chain is on the lumenal side. Residues 68–89 (ASGNQSHVDPDPPPTAHNSSSR) form a disordered region. N-linked (GlcNAc...) asparagine glycans are attached at residues Asn71 and Asn85. The chain crosses the membrane as a helical span at residues 128-148 (VLVSGICAAGSFILVAFSHSV). Topologically, residues 149–151 (GTS) are cytoplasmic. Residues 152-172 (LCGVVLASISSGVGEVTFLSL) traverse the membrane as a helical segment. The Lumenal segment spans residues 173-182 (TAFYPRAVIS). The chain crosses the membrane as a helical span at residues 183–203 (WWSSGTGGAGLMGALSYLGLT). Topologically, residues 204 to 277 (QAGLSPQHTL…NLSLQERWTV (74 aa)) are cytoplasmic. The tract at residues 236–267 (PQDPGGEEEAETSARQPLIDSETPESKPDSSS) is disordered. The Lysosomal targeting motif motif lies at 242-244 (EEE). A Lysosomal targeting motif. Required for AP1G1, AP2A2 and AP3D1 interaction motif is present at residues 253–254 (LI). A helical membrane pass occupies residues 278 to 298 (FKGLLWYIVPLVLVYFAEYFI). Residues 299-346 (NQGLFELLFFRNTSLNHAQQYRWYQMLYQAGVFVSRSSLHCCRIRFTW) are Lumenal-facing. Asn310 carries N-linked (GlcNAc...) asparagine glycosylation. Residues 347–367 (VLALLQCLNLAFLLVDVWFSF) traverse the membrane as a helical segment. The Cytoplasmic portion of the chain corresponds to 368 to 438 (LPSIYLVFLI…PLHDFLCHLS (71 aa)). Positions 409–419 (MAAACISDTLG) match the Lysosomal targeting motif motif. Cys435 is modified (cysteine methyl ester). Residue Cys435 is the site of S-farnesyl cysteine attachment. Positions 436-438 (HLS) are cleaved as a propeptide — removed in mature form.

Belongs to the battenin family. In terms of assembly, interacts with DCTN1, KIF3A, RAB7A and RILP. Interacts with CLN5. In terms of processing, highly glycosylated. Farnesylation is important for trafficking to lysosomes.

It localises to the lysosome membrane. The protein resides in the late endosome. The protein localises to the lysosome. Its function is as follows. Mediates microtubule-dependent, anterograde transport connecting the Golgi network, endosomes, autophagosomes, lysosomes and plasma membrane, and participates in several cellular processes such as regulation of lysosomal pH, lysosome protein degradation, receptor-mediated endocytosis, autophagy, transport of proteins and lipids from the TGN, apoptosis and synaptic transmission. Facilitates the proteins transport from trans-Golgi network (TGN)-to other membrane compartments such as transport of microdomain-associated proteins to the plasma membrane, IGF2R transport to the lysosome where it regulates the CTSD release leading to regulation of CTSD maturation and thereby APP intracellular processing. Moreover regulates CTSD activity in response to osmotic stress. Also binds galactosylceramide and transports it from the trans Golgi to the rafts, which may have immediate and downstream effects on cell survival by modulating ceramide synthesis. At the plasma membrane, regulates actin-dependent events including filopodia formation, cell migration, and pinocytosis through ARF1-CDC42 pathway and also the cytoskeleton organization through interaction with MYH10 and fodrin leading to the regulation of the plasma membrane association of Na+, K+ ATPase complex. Regulates synaptic transmission in the amygdala, hippocampus, and cerebellum through regulation of synaptic vesicles density and their proximity to active zones leading to modulation of short-term plasticity and age-dependent anxious behavior, learning and memory. Regulates autophagic vacuoles (AVs) maturation by modulating the trafficking between endocytic and autophagolysosomal/lysosomal compartments, which involves vesicle fusion leading to regulation of degradation process. Also participates in cellular homeostasis of compounds such as, water, ions, amino acids, proteins and lipids in several tissue namely in brain and kidney through regulation of their transport and synthesis. The polypeptide is Battenin (Canis lupus familiaris (Dog)).